The sequence spans 196 residues: Phosphoheptose isomerase (196 aa).

The SIS domain maps to 34 to 196; that stretch reads MVQCLLGGKK…DRTLFPQDEA (163 aa). Position 49–51 (49–51) interacts with substrate; it reads NGG. Residues H58 and E62 each contribute to the Zn(2+) site. Substrate contacts are provided by residues E62, 91-92, 117-119, S122, and Q172; these read ND and STS. Zn(2+) contacts are provided by Q172 and H180.

The protein belongs to the SIS family. GmhA subfamily. Homotetramer. The cofactor is Zn(2+).

The protein localises to the cytoplasm. The catalysed reaction is 2 D-sedoheptulose 7-phosphate = D-glycero-alpha-D-manno-heptose 7-phosphate + D-glycero-beta-D-manno-heptose 7-phosphate. Its pathway is carbohydrate biosynthesis; D-glycero-D-manno-heptose 7-phosphate biosynthesis; D-glycero-alpha-D-manno-heptose 7-phosphate and D-glycero-beta-D-manno-heptose 7-phosphate from sedoheptulose 7-phosphate: step 1/1. In terms of biological role, catalyzes the isomerization of sedoheptulose 7-phosphate in D-glycero-D-manno-heptose 7-phosphate. The protein is Phosphoheptose isomerase of Shewanella denitrificans (strain OS217 / ATCC BAA-1090 / DSM 15013).